The chain runs to 57 residues: Preprotein translocase subunit SecG (57 aa).

The Cytoplasmic segment spans residues 1 to 33 (MARRRKYEGLNPFVAAGLIKFSEEGELERIKLN). Residues 34 to 55 (PRTAILVSITVIIAILVLNILH) form a helical membrane-spanning segment. At 56–57 (PL) the chain is on the extracellular side.

The protein belongs to the SEC61-beta family. Component of the protein translocase complex. Heterotrimer consisting of alpha (SecY), beta (SecG) and gamma (SecE) subunits. Can form oligomers of the heterotrimer.

It localises to the cell membrane. Its function is as follows. Involved in protein export. The function of the beta subunit is unknown, but it may be involved in stabilization of the trimeric complex. In Pyrobaculum islandicum (strain DSM 4184 / JCM 9189 / GEO3), this protein is Preprotein translocase subunit SecG.